The sequence spans 271 residues: Tryptophan synthase alpha chain (271 aa).

Catalysis depends on proton acceptor residues E49 and D60.

This sequence belongs to the TrpA family. As to quaternary structure, tetramer of two alpha and two beta chains.

The enzyme catalyses (1S,2R)-1-C-(indol-3-yl)glycerol 3-phosphate + L-serine = D-glyceraldehyde 3-phosphate + L-tryptophan + H2O. It participates in amino-acid biosynthesis; L-tryptophan biosynthesis; L-tryptophan from chorismate: step 5/5. The alpha subunit is responsible for the aldol cleavage of indoleglycerol phosphate to indole and glyceraldehyde 3-phosphate. This chain is Tryptophan synthase alpha chain, found in Leptothrix cholodnii (strain ATCC 51168 / LMG 8142 / SP-6) (Leptothrix discophora (strain SP-6)).